The sequence spans 310 residues: tRNA-cytidine(32) 2-sulfurtransferase (310 aa).

The PP-loop motif signature appears at 47–52 (SGGKDS). 3 residues coordinate [4Fe-4S] cluster: Cys-122, Cys-125, and Cys-213.

The protein belongs to the TtcA family. Homodimer. The cofactor is Mg(2+). It depends on [4Fe-4S] cluster as a cofactor.

The protein resides in the cytoplasm. It carries out the reaction cytidine(32) in tRNA + S-sulfanyl-L-cysteinyl-[cysteine desulfurase] + AH2 + ATP = 2-thiocytidine(32) in tRNA + L-cysteinyl-[cysteine desulfurase] + A + AMP + diphosphate + H(+). It functions in the pathway tRNA modification. Catalyzes the ATP-dependent 2-thiolation of cytidine in position 32 of tRNA, to form 2-thiocytidine (s(2)C32). The sulfur atoms are provided by the cysteine/cysteine desulfurase (IscS) system. The protein is tRNA-cytidine(32) 2-sulfurtransferase of Haemophilus influenzae (strain PittEE).